Here is a 117-residue protein sequence, read N- to C-terminus: Ig heavy chain V region MOPC 47A (117 aa).

Positions 1-113 (EVKLVESGGG…FAYWGZGTLV (113 aa)) constitute an Ig-like domain.

The chain is Ig heavy chain V region MOPC 47A from Mus musculus (Mouse).